Here is an 89-residue protein sequence, read N- to C-terminus: Small ribosomal subunit protein uS17 (89 aa).

This sequence belongs to the universal ribosomal protein uS17 family. As to quaternary structure, part of the 30S ribosomal subunit.

In terms of biological role, one of the primary rRNA binding proteins, it binds specifically to the 5'-end of 16S ribosomal RNA. This chain is Small ribosomal subunit protein uS17, found in Novosphingobium aromaticivorans (strain ATCC 700278 / DSM 12444 / CCUG 56034 / CIP 105152 / NBRC 16084 / F199).